A 1607-amino-acid polypeptide reads, in one-letter code: Putative molluscan insulin-related peptide(s) receptor (1607 aa).

Positions 1 to 35 (MHPGSISFNMIINKCIPICLFILFIMMMEFTVSKA) are cleaved as a signal peptide. Residues Asn82, Asn188, Asn245, Asn275, Asn332, Asn343, Asn495, Asn520, Asn663, Asn710, Asn778, Asn796, Asn802, Asn868, Asn879, Asn940, and Asn953 are each glycosylated (N-linked (GlcNAc...) asparagine). Fibronectin type-III domains are found at residues 517–632 (HDLN…TYPF), 636–726 (EPTD…SKEE), and 756–861 (LPDE…TKDS). Topologically, residues 698–975 (EKVKIEEEGK…RPPDPESSNT (278 aa)) are extracellular. The Fibronectin type-III 4 domain maps to 870–967 (TTVDTEIETN…LERFFIVPRP (98 aa)). The chain crosses the membrane as a helical span at residues 976 to 996 (LLIVAIVLAFFGVLTVSLIVA). The Cytoplasmic segment spans residues 997–1607 (CVYYKQKIRS…WSTLKMVLVL (611 aa)). Residues 1037–1308 (IKLIKELGQG…AIIEYLLPKL (272 aa)) form the Protein kinase domain. ATP-binding positions include 1043 to 1051 (LGQGSFGMV) and Lys1072. Asp1173 acts as the Proton acceptor in catalysis. A Phosphotyrosine; by autocatalysis modification is found at Tyr1199. 2 disordered regions span residues 1328-1352 (GAGEGTLAEPEGSDDSSSINSLSCE) and 1501-1539 (TLNGNQSSHNNNSFELMTPDPLKSGPASESSNGVSSSSW). Residues 1503-1515 (NGNQSSHNNNSFE) show a composition bias toward polar residues. Over residues 1524–1538 (SGPASESSNGVSSSS) the composition is skewed to low complexity.

The protein belongs to the protein kinase superfamily. Tyr protein kinase family. Insulin receptor subfamily. In terms of assembly, probable tetramer of 2 alpha and 2 beta chains linked by disulfide bonds. The alpha chains contribute to the formation of the ligand-binding domain, while the beta chains carry the kinase domain. Mn(2+) is required as a cofactor.

It is found in the membrane. It catalyses the reaction L-tyrosyl-[protein] + ATP = O-phospho-L-tyrosyl-[protein] + ADP + H(+). In terms of biological role, this receptor probably binds to the four different molluscan insulin-related peptides and has a tyrosine-protein kinase activity. This is Putative molluscan insulin-related peptide(s) receptor from Lymnaea stagnalis (Great pond snail).